The sequence spans 310 residues: Methionyl-tRNA formyltransferase (310 aa).

(6S)-5,6,7,8-tetrahydrofolate is bound at residue 111-114; sequence SILP.

Belongs to the Fmt family.

It carries out the reaction L-methionyl-tRNA(fMet) + (6R)-10-formyltetrahydrofolate = N-formyl-L-methionyl-tRNA(fMet) + (6S)-5,6,7,8-tetrahydrofolate + H(+). Functionally, attaches a formyl group to the free amino group of methionyl-tRNA(fMet). The formyl group appears to play a dual role in the initiator identity of N-formylmethionyl-tRNA by promoting its recognition by IF2 and preventing the misappropriation of this tRNA by the elongation apparatus. In Methylobacterium sp. (strain 4-46), this protein is Methionyl-tRNA formyltransferase.